A 740-amino-acid polypeptide reads, in one-letter code: Ion-translocating oxidoreductase complex subunit C (740 aa).

2 consecutive 4Fe-4S ferredoxin-type domains span residues 369–397 and 407–436; these read GEPQ…QQLY and KATT…VQYF. [4Fe-4S] cluster contacts are provided by C377, C380, C383, C387, C416, C419, C422, and C426. The disordered stretch occupies residues 598-716; sequence AKARKLEQQQ…EPEEQVDPRK (119 aa).

It belongs to the 4Fe4S bacterial-type ferredoxin family. RnfC subfamily. The complex is composed of six subunits: RsxA, RsxB, RsxC, RsxD, RsxE and RsxG. Requires [4Fe-4S] cluster as cofactor.

The protein localises to the cell inner membrane. Its function is as follows. Part of a membrane-bound complex that couples electron transfer with translocation of ions across the membrane. Required to maintain the reduced state of SoxR. The polypeptide is Ion-translocating oxidoreductase complex subunit C (Shigella flexneri serotype 5b (strain 8401)).